Reading from the N-terminus, the 464-residue chain is Glutamate decarboxylase beta (464 aa).

K275 carries the post-translational modification N6-(pyridoxal phosphate)lysine.

Belongs to the group II decarboxylase family. The cofactor is pyridoxal 5'-phosphate.

It carries out the reaction L-glutamate + H(+) = 4-aminobutanoate + CO2. Converts internalized glutamate to GABA and increases the internal pH. Involved in glutamate-dependent acid resistance in gastric fluid. This chain is Glutamate decarboxylase beta (gadB), found in Listeria monocytogenes serovar 1/2a (strain ATCC BAA-679 / EGD-e).